Reading from the N-terminus, the 418-residue chain is Tyrosine--tRNA ligase (418 aa).

Position 34 (Tyr-34) interacts with L-tyrosine. The 'HIGH' region signature appears at 39–48 (PTGDSMHIGH). Positions 166 and 170 each coordinate L-tyrosine. A 'KMSKS' region motif is present at residues 228-232 (KFGKT). Lys-231 contacts ATP. The S4 RNA-binding domain occupies 350 to 418 (QNIVLWLVDA…KKRYFLAHVK (69 aa)).

Belongs to the class-I aminoacyl-tRNA synthetase family. TyrS type 1 subfamily. Homodimer.

The protein localises to the cytoplasm. It carries out the reaction tRNA(Tyr) + L-tyrosine + ATP = L-tyrosyl-tRNA(Tyr) + AMP + diphosphate + H(+). Its function is as follows. Catalyzes the attachment of tyrosine to tRNA(Tyr) in a two-step reaction: tyrosine is first activated by ATP to form Tyr-AMP and then transferred to the acceptor end of tRNA(Tyr). The protein is Tyrosine--tRNA ligase of Lactiplantibacillus plantarum (strain ATCC BAA-793 / NCIMB 8826 / WCFS1) (Lactobacillus plantarum).